The following is a 198-amino-acid chain: Imidazole glycerol phosphate synthase subunit HisH (198 aa).

One can recognise a Glutamine amidotransferase type-1 domain in the interval Met1–Thr194. Catalysis depends on Cys77, which acts as the Nucleophile. Active-site residues include His169 and Glu171.

As to quaternary structure, heterodimer of HisH and HisF.

The protein resides in the cytoplasm. It carries out the reaction 5-[(5-phospho-1-deoxy-D-ribulos-1-ylimino)methylamino]-1-(5-phospho-beta-D-ribosyl)imidazole-4-carboxamide + L-glutamine = D-erythro-1-(imidazol-4-yl)glycerol 3-phosphate + 5-amino-1-(5-phospho-beta-D-ribosyl)imidazole-4-carboxamide + L-glutamate + H(+). The catalysed reaction is L-glutamine + H2O = L-glutamate + NH4(+). It participates in amino-acid biosynthesis; L-histidine biosynthesis; L-histidine from 5-phospho-alpha-D-ribose 1-diphosphate: step 5/9. IGPS catalyzes the conversion of PRFAR and glutamine to IGP, AICAR and glutamate. The HisH subunit catalyzes the hydrolysis of glutamine to glutamate and ammonia as part of the synthesis of IGP and AICAR. The resulting ammonia molecule is channeled to the active site of HisF. This chain is Imidazole glycerol phosphate synthase subunit HisH, found in Staphylococcus saprophyticus subsp. saprophyticus (strain ATCC 15305 / DSM 20229 / NCIMB 8711 / NCTC 7292 / S-41).